The sequence spans 460 residues: Glutamyl-tRNA reductase (460 aa).

Substrate contacts are provided by residues 48 to 51 (TCNR), Ser100, 105 to 107 (EDQ), and Gln111. The active-site Nucleophile is Cys49. 180–185 (GAGEIG) provides a ligand contact to NADP(+).

Belongs to the glutamyl-tRNA reductase family. In terms of assembly, homodimer.

It carries out the reaction (S)-4-amino-5-oxopentanoate + tRNA(Glu) + NADP(+) = L-glutamyl-tRNA(Glu) + NADPH + H(+). Its pathway is porphyrin-containing compound metabolism; protoporphyrin-IX biosynthesis; 5-aminolevulinate from L-glutamyl-tRNA(Glu): step 1/2. Catalyzes the NADPH-dependent reduction of glutamyl-tRNA(Glu) to glutamate 1-semialdehyde (GSA). The polypeptide is Glutamyl-tRNA reductase (Methanosarcina acetivorans (strain ATCC 35395 / DSM 2834 / JCM 12185 / C2A)).